Consider the following 359-residue polypeptide: 5-amino-6-(D-ribitylamino)uracil--L-tyrosine 4-hydroxyphenyl transferase 1 (359 aa).

The 238-residue stretch at 45–282 (VTYVVNANIN…VYAISRIFFK (238 aa)) folds into the Radical SAM core domain. Residues C59, C63, and C66 each contribute to the [4Fe-4S] cluster site.

It belongs to the radical SAM superfamily. CofH family. Consists of two subunits, CofG and CofH. It depends on [4Fe-4S] cluster as a cofactor.

It carries out the reaction 5-amino-6-(D-ribitylamino)uracil + L-tyrosine + S-adenosyl-L-methionine = 5-amino-5-(4-hydroxybenzyl)-6-(D-ribitylimino)-5,6-dihydrouracil + 2-iminoacetate + 5'-deoxyadenosine + L-methionine + H(+). The protein operates within cofactor biosynthesis; coenzyme F0 biosynthesis. In terms of biological role, catalyzes the radical-mediated synthesis of 5-amino-5-(4-hydroxybenzyl)-6-(D-ribitylimino)-5,6-dihydrouracil from 5-amino-6-(D-ribitylamino)uracil and L-tyrosine. The sequence is that of 5-amino-6-(D-ribitylamino)uracil--L-tyrosine 4-hydroxyphenyl transferase 1 from Methanococcus maripaludis (strain DSM 14266 / JCM 13030 / NBRC 101832 / S2 / LL).